The chain runs to 104 residues: Large ribosomal subunit protein uL24 (104 aa).

The protein belongs to the universal ribosomal protein uL24 family. As to quaternary structure, part of the 50S ribosomal subunit.

Its function is as follows. One of two assembly initiator proteins, it binds directly to the 5'-end of the 23S rRNA, where it nucleates assembly of the 50S subunit. In terms of biological role, one of the proteins that surrounds the polypeptide exit tunnel on the outside of the subunit. This Flavobacterium psychrophilum (strain ATCC 49511 / DSM 21280 / CIP 103535 / JIP02/86) protein is Large ribosomal subunit protein uL24.